The sequence spans 143 residues: 6,7-dimethyl-8-ribityllumazine synthase (143 aa).

Residues W10, 44-46, and 68-70 contribute to the 5-amino-6-(D-ribitylamino)uracil site; these read SFE and CVI. 73-74 is a (2S)-2-hydroxy-3-oxobutyl phosphate binding site; it reads DT. The active-site Proton donor is the H76. Residue Y101 coordinates 5-amino-6-(D-ribitylamino)uracil. A (2S)-2-hydroxy-3-oxobutyl phosphate-binding site is contributed by R115.

It belongs to the DMRL synthase family.

The catalysed reaction is (2S)-2-hydroxy-3-oxobutyl phosphate + 5-amino-6-(D-ribitylamino)uracil = 6,7-dimethyl-8-(1-D-ribityl)lumazine + phosphate + 2 H2O + H(+). It functions in the pathway cofactor biosynthesis; riboflavin biosynthesis; riboflavin from 2-hydroxy-3-oxobutyl phosphate and 5-amino-6-(D-ribitylamino)uracil: step 1/2. In terms of biological role, catalyzes the formation of 6,7-dimethyl-8-ribityllumazine by condensation of 5-amino-6-(D-ribitylamino)uracil with 3,4-dihydroxy-2-butanone 4-phosphate. This is the penultimate step in the biosynthesis of riboflavin. The polypeptide is 6,7-dimethyl-8-ribityllumazine synthase (Bacteroides fragilis (strain YCH46)).